Here is a 253-residue protein sequence, read N- to C-terminus: Sulfate transporter CysZ (253 aa).

Helical transmembrane passes span 31–51, 75–95, 151–171, and 222–242; these read FVIL…WWLF, LLWP…FSTI, IVLL…PVLW, and IPLL…AMWV.

This sequence belongs to the CysZ family.

It is found in the cell inner membrane. High affinity, high specificity proton-dependent sulfate transporter, which mediates sulfate uptake. Provides the sulfur source for the cysteine synthesis pathway. This is Sulfate transporter CysZ from Shigella flexneri.